Reading from the N-terminus, the 177-residue chain is DELTA-stichotoxin-Hmg2b (177 aa).

Residues 3–12 form a plays an important role in the hemolytic activity region; sequence ALAGTIIAGA. Residues 11–30 are N-terminal region; it reads GASLGFQILDKVLGELGKVS. Phosphocholine contacts are provided by Ser54, Val87, Ser105, Pro107, Tyr133, Tyr137, and Tyr138.

The protein belongs to the actinoporin family. Sea anemone subfamily. As to quaternary structure, octamer or nonamer in membranes. Monomer in the soluble state.

The protein localises to the secreted. It is found in the nematocyst. It localises to the target cell membrane. In terms of biological role, pore-forming protein that forms cations-selective hydrophilic pores of around 1 nm and causes cytolysis. Pore formation is a multi-step process that involves specific recognition of membrane sphingomyelin (but neither cholesterol nor phosphatidylcholine) using aromatic rich region and adjacent phosphocholine (POC) binding site, firm binding to the membrane (mainly driven by hydrophobic interactions) accompanied by the transfer of the N-terminal region to the lipid-water interface and finally pore formation after oligomerization of monomers This toxin shows hemolytic activity. This is DELTA-stichotoxin-Hmg2b from Heteractis magnifica (Magnificent sea anemone).